The primary structure comprises 854 residues: Envelope glycoprotein gp160 (854 aa).

Positions 1–20 are cleaved as a signal peptide; sequence MGRLLIKILIIAIGISIGIG. Over 21–705 the chain is Extracellular; sequence NLYVTVFYGI…IILGLRFAWV (685 aa). N-linked (GlcNAc...) asparagine; by host glycosylation is present at Asn35. Cys42 and Cys55 are disulfide-bonded. Asn68, Asn115, Asn136, Asn153, Asn168, Asn182, and Asn199 each carry an N-linked (GlcNAc...) asparagine; by host glycan. 5 disulfide bridges follow: Cys99/Cys207, Cys106/Cys198, Cys111/Cys154, Cys220/Cys250, and Cys230/Cys242. The segment at 111 to 153 is V1; that stretch reads CVELNGTATTKATTTATTTMTTPCQNCSTEQIEGEMAEEPASN. A V2 region spans residues 154-198; that stretch reads CTFAIAGYQRDVKKNYSMTWYDQELVCNNKTGSEKGSKDCYMIHC. 13 N-linked (GlcNAc...) asparagine; by host glycosylation sites follow: Asn244, Asn255, Asn265, Asn271, Asn283, Asn295, Asn305, Asn355, Asn400, Asn409, Asn458, Asn472, and Asn478. The interval 300-332 is V3; that stretch reads CRRPGNKTVLPVTIMAGLVFHSQKYNTRLKQAW. Cys300 and Cys333 are joined by a disulfide. Intrachain disulfides connect Cys382–Cys457 and Cys389–Cys430. The segment at 389-430 is V4; that stretch reads CKMDWFINYLNNRTEDAEGTNRTCDKGKPGPGPCVQRTYVAC. Residues 473–481 form a V5 region; the sequence is KSGPINVTL. The interval 523–543 is fusion peptide; that stretch reads VPFVLGFLGFLGAAGTAMGAA. The interval 586-602 is immunosuppression; that stretch reads LNARVTALEKYLEDQAR. N-linked (GlcNAc...) asparagine; by host glycans are attached at residues Asn630 and Asn646. The stretch at 633-672 forms a coiled coil; sequence WLEWERQINALEGNITQLLEEAQNQESKNLDLYQKLDDWS. The segment at 667 to 688 is MPER; binding to GalCer; the sequence is KLDDWSGFWSWFSLSTWLGYVK. Residues 706–726 traverse the membrane as a helical segment; the sequence is LWGCIRNIRQGYNPLPQIHIH. The short motif at 717 to 720 is the YXXL motif; contains endocytosis signal element; that stretch reads YNPL. The Cytoplasmic portion of the chain corresponds to 727–854; the sequence is SSAERPDNGG…VRQGLEKVLG (128 aa).

The mature envelope protein (Env) consists of a homotrimer of non-covalently associated gp120-gp41 heterodimers. The resulting complex protrudes from the virus surface as a spike. Interacts with host CD4 and CCR5. Gp120 also interacts with the C-type lectins CD209/DC-SIGN and CLEC4M/DC-SIGNR (collectively referred to as DC-SIGN(R)). In terms of assembly, the mature envelope protein (Env) consists of a homotrimer of non-covalently associated gp120-gp41 heterodimers. The resulting complex protrudes from the virus surface as a spike. Post-translationally, specific enzymatic cleavages in vivo yield mature proteins. Envelope glycoproteins are synthesized as an inactive precursor that is heavily N-glycosylated and processed likely by host cell furin in the Golgi to yield the mature SU and TM proteins. The cleavage site between SU and TM requires the minimal sequence [KR]-X-[KR]-R.

The protein resides in the virion membrane. The protein localises to the host cell membrane. Its subcellular location is the host endosome membrane. In terms of biological role, the surface protein gp120 (SU) attaches the virus to the host lymphoid cell by binding to the primary receptor CD4. This interaction induces a structural rearrangement creating a high affinity binding site for a chemokine coreceptor like CCR5. This peculiar 2 stage receptor-interaction strategy allows gp120 to maintain the highly conserved coreceptor-binding site in a cryptic conformation, protected from neutralizing antibodies. These changes are transmitted to the transmembrane protein gp41 and are thought to activate its fusogenic potential by unmasking its fusion peptide. Its function is as follows. Surface protein gp120 (SU) may target the virus to gut-associated lymphoid tissue (GALT) by binding host ITGA4/ITGB7 (alpha-4/beta-7 integrins), a complex that mediates T-cell migration to the GALT. Interaction between gp120 and ITGA4/ITGB7 would allow the virus to enter GALT early in the infection, infecting and killing most of GALT's resting CD4+ T-cells. This T-cell depletion is believed to be the major insult to the host immune system leading to AIDS. Functionally, the surface protein gp120 is a ligand for CD209/DC-SIGN and CLEC4M/DC-SIGNR, which are respectively found on dendritic cells (DCs), and on endothelial cells of liver sinusoids and lymph node sinuses. These interactions allow capture of viral particles at mucosal surfaces by these cells and subsequent transmission to permissive cells. DCs are professional antigen presenting cells, critical for host immunity by inducing specific immune responses against a broad variety of pathogens. They act as sentinels in various tissues where they take up antigen, process it, and present it to T-cells following migration to lymphoid organs. SIV subverts the migration properties of dendritic cells to gain access to CD4+ T-cells in lymph nodes. Virus transmission to permissive T-cells occurs either in trans (without DCs infection, through viral capture and transmission), or in cis (following DCs productive infection, through the usual CD4-gp120 interaction), thereby inducing a robust infection. In trans infection, bound virions remain infectious over days and it is proposed that they are not degraded, but protected in non-lysosomal acidic organelles within the DCs close to the cell membrane thus contributing to the viral infectious potential during DCs' migration from the periphery to the lymphoid tissues. On arrival at lymphoid tissues, intact virions recycle back to DCs' cell surface allowing virus transmission to CD4+ T-cells. Virion capture also seems to lead to MHC-II-restricted viral antigen presentation, and probably to the activation of SIV-specific CD4+ cells. The transmembrane protein gp41 (TM) acts as a class I viral fusion protein. Under the current model, the protein has at least 3 conformational states: pre-fusion native state, pre-hairpin intermediate state, and post-fusion hairpin state. During fusion of viral and target intracellular membranes, the coiled coil regions (heptad repeats) assume a trimer-of-hairpins structure, positioning the fusion peptide in close proximity to the C-terminal region of the ectodomain. The formation of this structure appears to drive apposition and subsequent fusion of viral and target cell membranes. Complete fusion occurs in host cell endosomes. The virus undergoes clathrin-dependent internalization long before endosomal fusion, thus minimizing the surface exposure of conserved viral epitopes during fusion and reducing the efficacy of inhibitors targeting these epitopes. Membranes fusion leads to delivery of the nucleocapsid into the cytoplasm. In terms of biological role, the envelope glycoprotein gp160 precursor down-modulates cell surface CD4 antigen by interacting with it in the endoplasmic reticulum and blocking its transport to the cell surface. Its function is as follows. The gp120-gp41 heterodimer allows rapid transcytosis of the virus through CD4 negative cells such as simple epithelial monolayers of the intestinal, rectal and endocervical epithelial barriers. Both gp120 and gp41 specifically recognize glycosphingolipids galactosyl-ceramide (GalCer) or 3' sulfo-galactosyl-ceramide (GalS) present in the lipid rafts structures of epithelial cells. Binding to these alternative receptors allows the rapid transcytosis of the virus through the epithelial cells. This transcytotic vesicle-mediated transport of virions from the apical side to the basolateral side of the epithelial cells does not involve infection of the cells themselves. This Cercopithecidae (Old World monkeys) protein is Envelope glycoprotein gp160 (env).